Reading from the N-terminus, the 329-residue chain is MLSLESEVLTRHLPLFANKSILLFGDVRDRFADQIKANAKSVAVFSSYFDYARQYADVSFGLYCEIKAELAVFYWTKNKQECQYQLLQWLSQVDVGQEMLIIGENRAGVRSVEKLLEPYGNIAKIDSARRCGLYHFELQSVPDFDGKKFWKSYRLQDLNIFALPAVFSSAELDGGTQLLLSTFNKADRLKGKVLDLGCGAGVIGASLKQQFEKIKLTMSDIHAMALESSRRTFAENALDGTVVASDVFSNIEERFDLIVSNPPFHDGIDTAYRAVEDLIAQAKQRLNRGGELRIVANAFLPYPDLLDKAFGSHQVIAKSNKFKVYSAKA.

The protein belongs to the methyltransferase superfamily. RsmC family. Monomer.

It localises to the cytoplasm. It catalyses the reaction guanosine(1207) in 16S rRNA + S-adenosyl-L-methionine = N(2)-methylguanosine(1207) in 16S rRNA + S-adenosyl-L-homocysteine + H(+). Specifically methylates the guanine in position 1207 of 16S rRNA in the 30S particle. This Actinobacillus pleuropneumoniae serotype 5b (strain L20) protein is Ribosomal RNA small subunit methyltransferase C.